A 328-amino-acid chain; its full sequence is DNA-directed RNA polymerase subunit alpha (328 aa).

An alpha N-terminal domain (alpha-NTD) region spans residues 1-234 (MQGSVTEFLK…EQLDAFVDLR (234 aa)). The segment at 248 to 328 (FXPILLRPVD…NWPPASIAED (81 aa)) is alpha C-terminal domain (alpha-CTD).

It belongs to the RNA polymerase alpha chain family. Homodimer. The RNAP catalytic core consists of 2 alpha, 1 beta, 1 beta' and 1 omega subunit. When a sigma factor is associated with the core the holoenzyme is formed, which can initiate transcription.

It carries out the reaction RNA(n) + a ribonucleoside 5'-triphosphate = RNA(n+1) + diphosphate. In terms of biological role, DNA-dependent RNA polymerase catalyzes the transcription of DNA into RNA using the four ribonucleoside triphosphates as substrates. This is DNA-directed RNA polymerase subunit alpha from Haemophilus influenzae (strain ATCC 51907 / DSM 11121 / KW20 / Rd).